Reading from the N-terminus, the 656-residue chain is Bifunctional protein ThiO/ThiG (656 aa).

The thiO stretch occupies residues 1 to 395 (MQTTSDVLII…HAAENSEGSK (395 aa)). Residues 7-21 (VLII…AIAV) and 48-50 (AGM) each bind FAD. A glycine-binding site is contributed by Glu56. Val169 lines the FAD pocket. Glycine contacts are provided by Arg298 and Arg324. Residue 322–328 (HYRNGIL) participates in FAD binding. The tract at residues 396–656 (DLLEIAGRKF…ASSPLTGLVG (261 aa)) is thiG. Residue Lys498 is the Schiff-base intermediate with DXP of the active site. 1-deoxy-D-xylulose 5-phosphate-binding positions include Gly559, 585–586 (AG), and 607–608 (NS).

It in the N-terminal section; belongs to the DAO family. ThiO subfamily. This sequence in the C-terminal section; belongs to the ThiG family. As to quaternary structure, interacts with ThiH and ThiS. It depends on FAD as a cofactor.

It is found in the cytoplasm. The enzyme catalyses glycine + O2 + H2O = glyoxylate + H2O2 + NH4(+). It catalyses the reaction [ThiS sulfur-carrier protein]-C-terminal-Gly-aminoethanethioate + 2-iminoacetate + 1-deoxy-D-xylulose 5-phosphate = [ThiS sulfur-carrier protein]-C-terminal Gly-Gly + 2-[(2R,5Z)-2-carboxy-4-methylthiazol-5(2H)-ylidene]ethyl phosphate + 2 H2O + H(+). The protein operates within cofactor biosynthesis; thiamine diphosphate biosynthesis. Catalyzes the FAD-dependent oxidative deamination of glycine. Is essential for thiamine biosynthesis since the oxidation of glycine catalyzed by ThiO generates the glycine imine intermediate (dehydroglycine) required for the biosynthesis of the thiazole ring of thiamine pyrophosphate. Functionally, catalyzes the rearrangement of 1-deoxy-D-xylulose 5-phosphate (DXP) to produce the thiazole phosphate moiety of thiamine. Sulfur is provided by the thiocarboxylate moiety of the carrier protein ThiS. In vitro, sulfur can be provided by H(2)S. The protein is Bifunctional protein ThiO/ThiG (thiO/thiG) of Synechocystis sp. (strain ATCC 27184 / PCC 6803 / Kazusa).